Reading from the N-terminus, the 186-residue chain is Glutathione peroxidase 7 (186 aa).

Positions 1–18 are cleaved as a signal peptide; the sequence is MVAAVATAWLLLWAAACA. Residue Cys56 is part of the active site.

This sequence belongs to the glutathione peroxidase family.

The protein localises to the secreted. The enzyme catalyses 2 glutathione + H2O2 = glutathione disulfide + 2 H2O. In terms of biological role, it protects esophageal epithelia from hydrogen peroxide-induced oxidative stress. It suppresses acidic bile acid-induced reactive oxygen species (ROS) and protects against oxidative DNA damage and double-strand breaks. The polypeptide is Glutathione peroxidase 7 (Gpx7) (Mus musculus (Mouse)).